A 186-amino-acid polypeptide reads, in one-letter code: ADP-ribosylation factor-like protein 8B (186 aa).

N-acetylmethionine is present on Met-1. An intramembrane region (note=Mediates targeting to membranes) is located at residues 1–19 (MLALISRLLDWFRSLFWKE). Residues 29–35 (QYSGKTT), 71–75 (DIGGQ), and 130–133 (NKRD) contribute to the GTP site. Lys-141 participates in a covalent cross-link: Glycyl lysine isopeptide (Lys-Gly) (interchain with G-Cter in ubiquitin).

It belongs to the small GTPase superfamily. Arf family. In terms of assembly, interacts with tubulin. Interacts with BORCS5; recruits ARL8B to lysosomes. Interacts with VPS41; the interaction mediates the recruitment of the HOPS complex to lysosomes. Interacts (GTP-bound form) with PLEKHM2 (via RUN domain); the interaction is required to recruit the motor protein kinesin-1 on lysosomes. Interacts (GTP-bound form) with PLEKHM1 (via RUN domain); the interaction is required for PLEKHM1 localization to lysosomes and for ARL8B function in delivery and degradation of endocytic and autophagic cargo in lysosomes. PLEKHM1 and PLEKHM2 compete for interaction with ARL8B. Interacts (GTP-bound form) with RUFY1; the interaction is required for RUFY1 endosomal location. When GTP-bound, interacts with RUFY3 and RUFY4, but not with RUFY1, nor RUFY2. Ubiquitinated at Lys-141 by RNF167, leading to its degradation. Ubiquitously expressed.

The protein localises to the late endosome membrane. The protein resides in the lysosome membrane. It localises to the cytoplasm. It is found in the cytoskeleton. Its subcellular location is the spindle. The protein localises to the cell projection. The protein resides in the axon. It localises to the synapse. It is found in the cytolytic granule membrane. Its subcellular location is the early endosome membrane. It catalyses the reaction GTP + H2O = GDP + phosphate + H(+). Small GTPase which cycles between active GTP-bound and inactive GDP-bound states. In its active state, binds to a variety of effector proteins playing a key role in the regulation of lysosomal positioning which is important for nutrient sensing, natural killer cell-mediated cytotoxicity and antigen presentation. Along with its effectors, orchestrates lysosomal transport and fusion. Localizes specifically to lysosomal membranes and mediates anterograde lysosomal motility by recruiting PLEKHM2, which in turn recruits the motor protein kinesin-1 on lysosomes. Required for lysosomal and cytolytic granule exocytosis. Critical factor involved in NK cell-mediated cytotoxicity. Drives the polarization of cytolytic granules and microtubule-organizing centers (MTOCs) toward the immune synapse between effector NK lymphocytes and target cells. In neurons, mediates the anterograde axonal long-range transport of presynaptic lysosome-related vesicles required for presynaptic biogenesis and synaptic function. Also acts as a regulator of endosome to lysosome trafficking pathways of special significance for host defense. Recruits RUFY1 onto early endosomes regulating endosomes to trans-Golgi network proteins retrieval. Regulates cargo trafficking to lysosomes by binding to PLEKHM1 and recruiting the HOPS subunit VPS41, resulting in functional assembly of the HOPS complex on lysosomal membranes. Plays an important role in cargo delivery to lysosomes for antigen presentation and microbial killing. Directs the intersection of CD1d with lipid antigens in lysosomes, and plays a role in intersecting phagosomes with lysosomes to generate phagolysosomes that kill microbes. Involved in the process of MHC II presentation. Regulates the delivery of antigens to lysosomes and the formation of MHC II-peptide complexes through the recruitment of the HOPS complex to lysosomes allowing the fusion of late endosomes to lysosomes. May play a role in chromosome segregation. Its function is as follows. (Microbial infection) During Mycobacterium tuberculosis (Mtb) infection, is required for plasma membrane repair by controlling the exocytosis of lysosomes in macrophages. ARL8B secretion pathway is crucial to control the type of cell death of the M.tuberculosis-infected macrophages, distinguishing avirulent from virulent Mtb induced necrotic cell death. In terms of biological role, (Microbial infection) During infection, coronaviruses such as SARS-CoV-2 and the chaperone HSPA5/GRP78 are probably co-released through ARL8B-dependent lysosomal exocytic pathway for unconventional egress. This is ADP-ribosylation factor-like protein 8B from Homo sapiens (Human).